The following is a 341-amino-acid chain: Biotin synthase (341 aa).

A Radical SAM core domain is found at Ala-40–Arg-267. Cys-55, Cys-59, and Cys-62 together coordinate [4Fe-4S] cluster. Residues Cys-99, Cys-130, Cys-190, and Arg-262 each coordinate [2Fe-2S] cluster.

This sequence belongs to the radical SAM superfamily. Biotin synthase family. In terms of assembly, homodimer. [4Fe-4S] cluster is required as a cofactor. Requires [2Fe-2S] cluster as cofactor.

It catalyses the reaction (4R,5S)-dethiobiotin + (sulfur carrier)-SH + 2 reduced [2Fe-2S]-[ferredoxin] + 2 S-adenosyl-L-methionine = (sulfur carrier)-H + biotin + 2 5'-deoxyadenosine + 2 L-methionine + 2 oxidized [2Fe-2S]-[ferredoxin]. Its pathway is cofactor biosynthesis; biotin biosynthesis; biotin from 7,8-diaminononanoate: step 2/2. In terms of biological role, catalyzes the conversion of dethiobiotin (DTB) to biotin by the insertion of a sulfur atom into dethiobiotin via a radical-based mechanism. This Xylella fastidiosa (strain M12) protein is Biotin synthase.